Consider the following 284-residue polypeptide: Small ribosomal subunit protein uS5y/uS5u/uS5v (284 aa).

The segment covering 1-19 (MAERGGESGAERGGDRGDF) has biased composition (basic and acidic residues). The tract at residues 1–51 (MAERGGESGAERGGDRGDFGRGFGGGRGGGRGRDRGPRGRGRRGGRASEET) is disordered. Over residues 20 to 29 (GRGFGGGRGG) the composition is skewed to gly residues. Residues 95 to 158 (LKDEVMKIMP…ILAKLSVVPV (64 aa)) enclose the S5 DRBM domain.

The protein belongs to the universal ribosomal protein uS5 family.

This is Small ribosomal subunit protein uS5y/uS5u/uS5v (RPS2B) from Arabidopsis thaliana (Mouse-ear cress).